Here is a 321-residue protein sequence, read N- to C-terminus: Probable arabinan endo-1,5-alpha-L-arabinosidase A (321 aa).

An N-terminal signal peptide occupies residues 1 to 19 (MSASVFVVVASCLAALAHG). The Proton acceptor role is filled by D34. The active-site Proton donor is E200.

The protein belongs to the glycosyl hydrolase 43 family.

The protein localises to the secreted. It carries out the reaction Endohydrolysis of (1-&gt;5)-alpha-arabinofuranosidic linkages in (1-&gt;5)-arabinans.. It functions in the pathway glycan metabolism; L-arabinan degradation. Endo-1,5-alpha-L-arabinanase involved in degradation of pectin. Its preferred substrate is linear 1,5-alpha-L-arabinan. This Aspergillus fumigatus (strain ATCC MYA-4609 / CBS 101355 / FGSC A1100 / Af293) (Neosartorya fumigata) protein is Probable arabinan endo-1,5-alpha-L-arabinosidase A (abnA).